The sequence spans 284 residues: Parvulin-like PPIase (284 aa).

The signal sequence occupies residues 1–20; the sequence is MKKLSIVLLSVSMLSSIAFA. The PpiC domain occupies 139-232; it reads KEQIKVAHIL…YGWHIIKVLE (94 aa).

Belongs to the PpiC/parvulin rotamase family.

Its subcellular location is the cell outer membrane. The catalysed reaction is [protein]-peptidylproline (omega=180) = [protein]-peptidylproline (omega=0). In Rickettsia bellii (strain RML369-C), this protein is Parvulin-like PPIase (plp).